Reading from the N-terminus, the 429-residue chain is MTVHVTGCSTATADQLVSREIRTESGQREVFCGLTGIVWLHRKIQDAFFLVVGSRTCAHLVQSAAGVMIFAEPRFGTAIMEEKDLAGLTDANDELDRVVTQLLARRPDIKLLFLVGSCPSEVIKLDLSRAALRLSQRFSPGVRILNYSGSGIETTFTQGEDACLASLVPELPAQTDTKPSLLVVGSLADVVEDQFARMFEALGVGNVAFFPPRKSTALPSVGPNTKILMAQPFLPDTVRALEERGAKRLAAPFPLGVEGTTGWLRAAADAFGVDPAKFEQVTAPNRARAERALSAFKSELGGRRIFFFPDSQLEIPLARFLSRELDMQLVEVATPYLHREHLAEELKLLPIEVALTEGQDVDDQLDRCRIARPDIVVCGLGLANPLEAEGITTKWSIELVFTPIQGYEQAADLAELFARPLVRRAKLVA.

3 residues coordinate [4Fe-4S] cluster: Cys32, Cys57, and Cys118.

It belongs to the BchN/ChlN family. Protochlorophyllide reductase is composed of three subunits; BchL, BchN and BchB. Forms a heterotetramer of two BchB and two BchN subunits. [4Fe-4S] cluster serves as cofactor.

The catalysed reaction is chlorophyllide a + oxidized 2[4Fe-4S]-[ferredoxin] + 2 ADP + 2 phosphate = protochlorophyllide a + reduced 2[4Fe-4S]-[ferredoxin] + 2 ATP + 2 H2O. It participates in porphyrin-containing compound metabolism; bacteriochlorophyll biosynthesis (light-independent). Functionally, component of the dark-operative protochlorophyllide reductase (DPOR) that uses Mg-ATP and reduced ferredoxin to reduce ring D of protochlorophyllide (Pchlide) to form chlorophyllide a (Chlide). This reaction is light-independent. The NB-protein (BchN-BchB) is the catalytic component of the complex. This chain is Light-independent protochlorophyllide reductase subunit N, found in Rhodopseudomonas palustris (strain ATCC BAA-98 / CGA009).